A 94-amino-acid polypeptide reads, in one-letter code: Pyrimidine/purine nucleoside phosphorylase (94 aa).

This sequence belongs to the nucleoside phosphorylase PpnP family.

The catalysed reaction is a purine D-ribonucleoside + phosphate = a purine nucleobase + alpha-D-ribose 1-phosphate. It carries out the reaction adenosine + phosphate = alpha-D-ribose 1-phosphate + adenine. It catalyses the reaction cytidine + phosphate = cytosine + alpha-D-ribose 1-phosphate. The enzyme catalyses guanosine + phosphate = alpha-D-ribose 1-phosphate + guanine. The catalysed reaction is inosine + phosphate = alpha-D-ribose 1-phosphate + hypoxanthine. It carries out the reaction thymidine + phosphate = 2-deoxy-alpha-D-ribose 1-phosphate + thymine. It catalyses the reaction uridine + phosphate = alpha-D-ribose 1-phosphate + uracil. The enzyme catalyses xanthosine + phosphate = alpha-D-ribose 1-phosphate + xanthine. Functionally, catalyzes the phosphorolysis of diverse nucleosides, yielding D-ribose 1-phosphate and the respective free bases. Can use uridine, adenosine, guanosine, cytidine, thymidine, inosine and xanthosine as substrates. Also catalyzes the reverse reactions. The chain is Pyrimidine/purine nucleoside phosphorylase from Pseudomonas fluorescens (strain Pf0-1).